The following is a 257-amino-acid chain: Imidazole glycerol phosphate synthase subunit HisF (257 aa).

Catalysis depends on residues Asp-11 and Asp-130.

It belongs to the HisA/HisF family. As to quaternary structure, heterodimer of HisH and HisF.

The protein localises to the cytoplasm. It catalyses the reaction 5-[(5-phospho-1-deoxy-D-ribulos-1-ylimino)methylamino]-1-(5-phospho-beta-D-ribosyl)imidazole-4-carboxamide + L-glutamine = D-erythro-1-(imidazol-4-yl)glycerol 3-phosphate + 5-amino-1-(5-phospho-beta-D-ribosyl)imidazole-4-carboxamide + L-glutamate + H(+). The protein operates within amino-acid biosynthesis; L-histidine biosynthesis; L-histidine from 5-phospho-alpha-D-ribose 1-diphosphate: step 5/9. Its function is as follows. IGPS catalyzes the conversion of PRFAR and glutamine to IGP, AICAR and glutamate. The HisF subunit catalyzes the cyclization activity that produces IGP and AICAR from PRFAR using the ammonia provided by the HisH subunit. This is Imidazole glycerol phosphate synthase subunit HisF from Shewanella denitrificans (strain OS217 / ATCC BAA-1090 / DSM 15013).